Consider the following 497-residue polypeptide: Probable cytosol aminopeptidase (497 aa).

Mn(2+) is bound by residues Lys263 and Asp268. Lys275 is a catalytic residue. Asp286, Asp345, and Glu347 together coordinate Mn(2+). Arg349 is a catalytic residue.

Belongs to the peptidase M17 family. Mn(2+) is required as a cofactor.

It localises to the cytoplasm. The catalysed reaction is Release of an N-terminal amino acid, Xaa-|-Yaa-, in which Xaa is preferably Leu, but may be other amino acids including Pro although not Arg or Lys, and Yaa may be Pro. Amino acid amides and methyl esters are also readily hydrolyzed, but rates on arylamides are exceedingly low.. It catalyses the reaction Release of an N-terminal amino acid, preferentially leucine, but not glutamic or aspartic acids.. Functionally, presumably involved in the processing and regular turnover of intracellular proteins. Catalyzes the removal of unsubstituted N-terminal amino acids from various peptides. This chain is Probable cytosol aminopeptidase, found in Methylorubrum extorquens (strain CM4 / NCIMB 13688) (Methylobacterium extorquens).